A 78-amino-acid chain; its full sequence is Acyl carrier protein (78 aa).

A Carrier domain is found at serine 2 to threonine 77. Serine 37 bears the O-(pantetheine 4'-phosphoryl)serine mark.

The protein belongs to the acyl carrier protein (ACP) family. Post-translationally, 4'-phosphopantetheine is transferred from CoA to a specific serine of apo-ACP by AcpS. This modification is essential for activity because fatty acids are bound in thioester linkage to the sulfhydryl of the prosthetic group.

It is found in the cytoplasm. The protein operates within lipid metabolism; fatty acid biosynthesis. Its function is as follows. Carrier of the growing fatty acid chain in fatty acid biosynthesis. The polypeptide is Acyl carrier protein (Caulobacter vibrioides (strain ATCC 19089 / CIP 103742 / CB 15) (Caulobacter crescentus)).